The sequence spans 130 residues: Histone H2A type 4 (130 aa).

A Phosphoserine; by RPS6KA5 modification is found at Ser2. Arg4 bears the Citrulline; alternate mark. Residue Arg4 is modified to Symmetric dimethylarginine; by PRMT5; alternate. N6-(2-hydroxyisobutyryl)lysine; alternate occurs at positions 6 and 10. An N6-acetyllysine; alternate mark is found at Lys6 and Lys10. Lys10 carries the N6-lactoyllysine; alternate modification. Lys75, Lys76, and Lys96 each carry N6-(2-hydroxyisobutyryl)lysine. Residue Lys96 is modified to N6-glutaryllysine; alternate. Gln105 is modified (N5-methylglutamine). An N6-(2-hydroxyisobutyryl)lysine; alternate modification is found at Lys119. 2 positions are modified to N6-glutaryllysine; alternate: Lys119 and Lys120. Residue Lys119 is modified to N6-crotonyllysine; alternate. The residue at position 120 (Lys120) is an N6-crotonyllysine. Thr121 is subject to Phosphothreonine; by DCAF1. Lys126 is modified (N6-glutaryllysine; alternate). Lys126 carries the post-translational modification N6-crotonyllysine; alternate. The short motif at 127 to 128 is the [ST]-Q motif element; it reads SQ.

The protein belongs to the histone H2A family. The nucleosome is a histone octamer containing two molecules each of H2A, H2B, H3 and H4 assembled in one H3-H4 heterotetramer and two H2A-H2B heterodimers. The octamer wraps approximately 147 bp of DNA. In terms of processing, deiminated on Arg-4 in granulocytes upon calcium entry. Post-translationally, monoubiquitination of Lys-120 (H2AK119Ub) by RING1, TRIM37 and RNF2/RING2 complex gives a specific tag for epigenetic transcriptional repression and participates in X chromosome inactivation of female mammals. It is involved in the initiation of both imprinted and random X inactivation. Ubiquitinated H2A is enriched in inactive X chromosome chromatin. Ubiquitination of H2A functions downstream of methylation of 'Lys-27' of histone H3 (H3K27me). H2AK119Ub by RNF2/RING2 can also be induced by ultraviolet and may be involved in DNA repair. Following DNA double-strand breaks (DSBs), it is ubiquitinated through 'Lys-63' linkage of ubiquitin moieties by the E2 ligase UBE2N and the E3 ligases RNF8 and RNF168, leading to the recruitment of repair proteins to sites of DNA damage. Ubiquitination at Lys-14 and Lys-16 (H2AK13Ub and H2AK15Ub, respectively) in response to DNA damage is initiated by RNF168 that mediates monoubiquitination at these 2 sites, and 'Lys-63'-linked ubiquitin are then conjugated to monoubiquitin; RNF8 is able to extend 'Lys-63'-linked ubiquitin chains in vitro. H2AK119Ub and ionizing radiation-induced 'Lys-63'-linked ubiquitination (H2AK13Ub and H2AK15Ub) are distinct events. Phosphorylation on Ser-2 (H2AS1ph) is enhanced during mitosis. Phosphorylation on Ser-2 by RPS6KA5/MSK1 directly represses transcription. Acetylation of H3 inhibits Ser-2 phosphorylation by RPS6KA5/MSK1. Phosphorylation at Thr-121 (H2AT120ph) by DCAF1 is present in the regulatory region of many tumor suppresor genes and down-regulates their transcription. In terms of processing, symmetric dimethylation on Arg-4 by the PRDM1/PRMT5 complex may play a crucial role in the germ-cell lineage. Post-translationally, glutamine methylation at Gln-105 (H2AQ104me) by FBL is specifically dedicated to polymerase I. It is present at 35S ribosomal DNA locus and impairs binding of the FACT complex. Crotonylation (Kcr) is specifically present in male germ cells and marks testis-specific genes in post-meiotic cells, including X-linked genes that escape sex chromosome inactivation in haploid cells. Crotonylation marks active promoters and enhancers and confers resistance to transcriptional repressors. It is also associated with post-meiotically activated genes on autosomes. In terms of processing, lactylated in macrophages by EP300/P300 by using lactoyl-CoA directly derived from endogenous or exogenous lactate, leading to stimulates gene transcription. Testis.

Its subcellular location is the nucleus. The protein localises to the chromosome. In terms of biological role, core component of nucleosome. Nucleosomes wrap and compact DNA into chromatin, limiting DNA accessibility to the cellular machineries which require DNA as a template. Histones thereby play a central role in transcription regulation, DNA repair, DNA replication and chromosomal stability. DNA accessibility is regulated via a complex set of post-translational modifications of histones, also called histone code, and nucleosome remodeling. The chain is Histone H2A type 4 from Rattus norvegicus (Rat).